Reading from the N-terminus, the 438-residue chain is GTPase Der (438 aa).

2 EngA-type G domains span residues 3–168 (PLIA…PCPE) and 179–354 (IKLA…INRR). GTP-binding positions include 9–16 (GRPNVGKS), 56–60 (DTGGY), 120–123 (NKVD), 185–192 (GRPNVGKS), 232–236 (DTAGL), and 297–300 (NKWD). Positions 355 to 438 (QKISTSNLNR…LPITMRFLRK (84 aa)) constitute a KH-like domain.

Belongs to the TRAFAC class TrmE-Era-EngA-EngB-Septin-like GTPase superfamily. EngA (Der) GTPase family. Associates with the 50S ribosomal subunit.

In terms of biological role, GTPase that plays an essential role in the late steps of ribosome biogenesis. The chain is GTPase Der from Chlorobaculum parvum (strain DSM 263 / NCIMB 8327) (Chlorobium vibrioforme subsp. thiosulfatophilum).